The following is a 49-amino-acid chain: Soritesidine (49 aa).

Its subcellular location is the secreted. Very potent toxin that exhibits a wide range of toxicities over various organisms and cells including brine shrimp larvae (Artemia salina), sea hare eggs (Aplysia kurodai), mice, and cultured mammalian cells. An SOR-containing fraction cleaves plasmid DNA in a bivalent metal ion dependent manner suggesting genotoxicity of SOR. In Spongosorites sp. (strain QM G324170) (Okinawan marine Sponge), this protein is Soritesidine.